The following is a 644-amino-acid chain: Probable potassium transport system protein Kup 2 (644 aa).

The interval 1 to 21 is disordered; sequence MSSDAAAVADRDGSSPGHGGH. 12 helical membrane-spanning segments follow: residues 26–46, 69–89, 120–140, 155–175, 183–203, 231–251, 265–285, 312–332, 360–380, 390–410, 419–439, and 444–464; these read LGAMVVGAVGVVFGDIGTSPL, VLSLIFWSMMLVVTFKYVAII, IILLGVFATALFYGDSMITPA, AGFAPMVLPIAVGILIALFMI, VGMLFGPIMMIYFTTLGVLGT, LAFLAMGSVVLAVTGAEALYA, WLVFVLPALMLNYLGQGAMIL, LVILATMATVIASQAVITGAF, IYIPAINWGLMVMVILLVMSF, YGIAVTGAMAIDTCLIAVVLI, LAAPLIAVFAAVDIAYFGANL, and DGGWFPLLIGFIAFTLLTTWG.

The protein belongs to the HAK/KUP transporter (TC 2.A.72) family.

The protein resides in the cell inner membrane. The catalysed reaction is K(+)(in) + H(+)(in) = K(+)(out) + H(+)(out). Functionally, transport of potassium into the cell. Likely operates as a K(+):H(+) symporter. The protein is Probable potassium transport system protein Kup 2 of Rhizorhabdus wittichii (strain DSM 6014 / CCUG 31198 / JCM 15750 / NBRC 105917 / EY 4224 / RW1) (Sphingomonas wittichii).